The primary structure comprises 3079 residues: Inhibitory regulator protein IRA2 (3079 aa).

Residues 392 to 554 (NQNAHQGSSS…RASYDAHKTG (163 aa)) form a disordered region. Low complexity predominate over residues 399–416 (SSSPSSSSPSSPPSSSSS). Polar residues predominate over residues 417 to 442 (DNNNQNIIAKSLSRQLSHHQSYIQQQ). Over residues 449–477 (SSWTTNSQSSTSLSSSTSNSTTTDFSTHT) the composition is skewed to low complexity. The span at 488–497 (DTPTMSNITI) shows a compositional bias: polar residues. The segment covering 498 to 528 (SASSLLSQTPTPTTQLQQRLNSAAAAAAAAA) has biased composition (low complexity). Residues 529 to 546 (SPSNSTPTGYTAEQQSRA) show a composition bias toward polar residues. Phosphothreonine is present on T635. Disordered stretches follow at residues 867–898 (FKGSSPSLCSTTRSRSGSTSQSSMTPVSPLGL), 912–935 (GSSTSRNSDNVNSLNSSPKNLSSD), and 952–980 (GPSSIIRNKIPTTLTSPPGTEKSSPVQRP). Composition is skewed to low complexity over residues 873-894 (SLCSTTRSRSGSTSQSSMTPVS) and 921-934 (NVNSLNSSPKNLSS). Residues 961 to 980 (IPTTLTSPPGTEKSSPVQRP) show a composition bias toward polar residues. Positions 1717–1922 (NATHIVVAQL…DRIFRFLAEL (206 aa)) constitute a Ras-GAP domain.

It is found in the cytoplasm. Inhibitory regulator of the Ras-cyclic AMP pathway. Stimulates the GTPase activity of Ras proteins. The chain is Inhibitory regulator protein IRA2 (IRA2) from Saccharomyces cerevisiae (strain ATCC 204508 / S288c) (Baker's yeast).